The primary structure comprises 365 residues: Isopentenyl-diphosphate delta-isomerase (365 aa).

8–9 (RK) provides a ligand contact to substrate. Residues 67–69 (SIT), Ser97, and Asn126 each bind FMN. 97 to 99 (SQR) serves as a coordination point for substrate. Substrate is bound at residue Gln160. Glu161 is a Mg(2+) binding site. FMN-binding positions include Lys192, Thr222, 272–274 (GIR), and 293–294 (AL).

Belongs to the IPP isomerase type 2 family. As to quaternary structure, homooctamer. Dimer of tetramers. FMN serves as cofactor. The cofactor is NADPH. Mg(2+) is required as a cofactor.

It is found in the cytoplasm. It carries out the reaction isopentenyl diphosphate = dimethylallyl diphosphate. Involved in the biosynthesis of isoprenoids. Catalyzes the 1,3-allylic rearrangement of the homoallylic substrate isopentenyl (IPP) to its allylic isomer, dimethylallyl diphosphate (DMAPP). In Methanosarcina mazei (strain ATCC BAA-159 / DSM 3647 / Goe1 / Go1 / JCM 11833 / OCM 88) (Methanosarcina frisia), this protein is Isopentenyl-diphosphate delta-isomerase.